The primary structure comprises 171 residues: Der GTPase-activating protein YihI (171 aa).

Disordered stretches follow at residues 1-99 (MKKP…PQAE) and 145-171 (GLSYEDDEDDEEEEKQDDMMRLLKGGN). Basic and acidic residues predominate over residues 20-30 (TREELNQEARD). Positions 40 to 59 (HSAGSRANGSSASGSTAQNS) are enriched in low complexity. The span at 148–160 (YEDDEDDEEEEKQ) shows a compositional bias: acidic residues.

Belongs to the YihI family. Interacts with Der.

Functionally, a GTPase-activating protein (GAP) that modifies Der/EngA GTPase function. May play a role in ribosome biogenesis. This is Der GTPase-activating protein YihI from Enterobacter sp. (strain 638).